A 597-amino-acid chain; its full sequence is DNA polymerase III subunit gamma/tau (597 aa).

44 to 51 (GERGTGKT) is an ATP binding site. Residues C63, C72, C75, and C78 each coordinate Zn(2+).

Belongs to the DnaX/STICHEL family. DNA polymerase III contains a core (composed of alpha, epsilon and theta chains) that associates with a tau subunit. This core dimerizes to form the POLIII' complex. PolIII' associates with the gamma complex (composed of gamma, delta, delta', psi and chi chains) and with the beta chain to form the complete DNA polymerase III complex.

It catalyses the reaction DNA(n) + a 2'-deoxyribonucleoside 5'-triphosphate = DNA(n+1) + diphosphate. Functionally, DNA polymerase III is a complex, multichain enzyme responsible for most of the replicative synthesis in bacteria. This DNA polymerase also exhibits 3' to 5' exonuclease activity. The polypeptide is DNA polymerase III subunit gamma/tau (dnaX) (Mycoplasma genitalium (strain ATCC 33530 / DSM 19775 / NCTC 10195 / G37) (Mycoplasmoides genitalium)).